A 533-amino-acid polypeptide reads, in one-letter code: Phosphatidylinositol 4-kinase gamma 8 (533 aa).

A PI3K/PI4K catalytic domain is found at 101–397 (GAQPLLLPSG…AVSGSDDDDD (297 aa)). Residues 107-113 (LPSGLGG) form a G-loop region. ATP contacts are provided by residues 108-114 (PSGLGGA), lysine 129, and 210-213 (QRFV). A catalytic loop region spans residues 243–251 (LNLDRHAGN). Residues 276–302 (PIDHGLCLPECLDDPYFEWLNWPQASV) form an activation loop region. Aspartate 278 contacts ATP.

It belongs to the PI3/PI4-kinase family. Type II PI4K subfamily.

The catalysed reaction is a 1,2-diacyl-sn-glycero-3-phospho-(1D-myo-inositol) + ATP = a 1,2-diacyl-sn-glycero-3-phospho-(1D-myo-inositol 4-phosphate) + ADP + H(+). The phosphorylation of phosphatidylinositol (PI) to PI4P is the first committed step in the generation of phosphatidylinositol 4,5-bisphosphate (PIP2), a precursor of the second messenger inositol 1,4,5-trisphosphate (InsP3). This Arabidopsis thaliana (Mouse-ear cress) protein is Phosphatidylinositol 4-kinase gamma 8 (PI4KG8).